The primary structure comprises 278 residues: S-formylglutathione hydrolase YeiG (278 aa).

Active-site charge relay system residues include Ser-145, Asp-223, and His-256.

This sequence belongs to the esterase D family.

It carries out the reaction S-formylglutathione + H2O = formate + glutathione + H(+). Its function is as follows. Serine hydrolase involved in the detoxification of formaldehyde. Hydrolyzes S-formylglutathione to glutathione and formate. In Escherichia coli (strain SMS-3-5 / SECEC), this protein is S-formylglutathione hydrolase YeiG (yeiG).